A 148-amino-acid chain; its full sequence is Outer envelope pore protein 16-1, chloroplastic (148 aa).

The tract at residues Pro-2–Glu-73 is contains 4 beta strands. 3 helical membrane passes run Val-75–Ile-91, Asn-102–Gly-118, and Ile-125–Val-142.

Belongs to the Tim17/Tim22/Tim23 family. Plastid outer envelope porin OEP16 (TC 1.B.30) subfamily. As to quaternary structure, homodimer and oligomers in membrane. Forms large complexes including TOC33, pPORA and OEP161 during pPORA import into plastids at the plastid envelope membrane. Expressed predominantly in leaves and cotyledons.

It localises to the plastid. Its subcellular location is the chloroplast outer membrane. It is found in the etioplast membrane. Stimulated by GTP. Voltage-dependent high-conductance channel with a slight cation-selectivity; selective for amino acids but excludes triosephosphates or uncharged sugars. Non-essential amino acid-selective channel protein and translocation pore for NADPH:protochlorophyllide oxidoreductase A (PORA) and possibly PORB. Involved in PORA precursor (pPORA) import and thus confers photoprotection onto etiolated seedlings during greening. The polypeptide is Outer envelope pore protein 16-1, chloroplastic (OEP161) (Arabidopsis thaliana (Mouse-ear cress)).